Reading from the N-terminus, the 456-residue chain is tRNA-2-methylthio-N(6)-dimethylallyladenosine synthase (456 aa).

The MTTase N-terminal domain occupies 13–129 (RYLYVRTFGC…IASLLEEVER (117 aa)). Cys-22, Cys-58, Cys-92, Cys-168, Cys-172, and Cys-175 together coordinate [4Fe-4S] cluster. One can recognise a Radical SAM core domain in the interval 154–384 (GTGDVVAQVT…QSIQADITLQ (231 aa)). One can recognise a TRAM domain in the interval 387–450 (LAETGTVREV…SHSLKGELLS (64 aa)).

This sequence belongs to the methylthiotransferase family. MiaB subfamily. In terms of assembly, monomer. The cofactor is [4Fe-4S] cluster.

It localises to the cytoplasm. It carries out the reaction N(6)-dimethylallyladenosine(37) in tRNA + (sulfur carrier)-SH + AH2 + 2 S-adenosyl-L-methionine = 2-methylsulfanyl-N(6)-dimethylallyladenosine(37) in tRNA + (sulfur carrier)-H + 5'-deoxyadenosine + L-methionine + A + S-adenosyl-L-homocysteine + 2 H(+). Its function is as follows. Catalyzes the methylthiolation of N6-(dimethylallyl)adenosine (i(6)A), leading to the formation of 2-methylthio-N6-(dimethylallyl)adenosine (ms(2)i(6)A) at position 37 in tRNAs that read codons beginning with uridine. In Syntrophobacter fumaroxidans (strain DSM 10017 / MPOB), this protein is tRNA-2-methylthio-N(6)-dimethylallyladenosine synthase.